Reading from the N-terminus, the 125-residue chain is MKVVCIILLFGIAAANVSATNKAGSSKNAKDTEGKKEILRFPRFIPNPKELATKLLDICKEHEKDSPSSYTAINDKHLDFKNCTFLCKHGPHKNVTLALPEETPCGPSGQTCADKSKCVGHIPGC.

A signal peptide spans Met-1–Ala-15. 2 N-linked (GlcNAc...) asparagine glycosylation sites follow: Asn-82 and Asn-94. Residues Gly-106–Cys-125 form a CD4-binding region.

The protein belongs to the salp15 family. In terms of assembly, interacts with host CD4. Interacts with host DC-SIGN (CD209). Interacts with Borrelia outer surface protein C (OspC). Expressed in salivary glands.

It localises to the secreted. In terms of biological role, salivary tick protein that downregulates host immune system by binding to both dendritic cells, and CD4(+) T cells. Specifically binds to the CD4 coreceptor on T cells. This interaction prevents the activation of the Src kinase, Lck, and its downstream substrate Zap-70, and results in deficient activation of PLCgamma1, the repression of calcium fluxes triggered by T-cell antigen receptor (TCR) ligation, and a subsequent reduction in interleukin-2 production. This salivary protein also binds to DC-SIGN (CD209) on dendritic cells (DC) and activates the Raf-1 kinase/MEK signaling pathway that results in down-regulating expression of pro-inflammatory cytokines. Furthermore, it inhibits T cell proliferation induced by DCs. It also inhibits in vitro keratinocyte inflammation induced by Borrelia burgdorferi or by the major outer surface protein (OspC) of Borrelia. In addition, it downregulates chemokines and monocyte chemoattractant protein 1, as well as several antimicrobial peptides such as defensins, cathelicidin, psoriasin, and RNase 7. Apart from its immunomodulatory activities, it is also associated with protection of Borrelia spirochetes from antibody-mediated killing through its binding to OspC. In vivo, tests on different immune disease animal models show promising therapeutic results, e.g., in inhibiting HIV infection, experimental autoimmune encephalomyelitis, transplantation rejection, and asthma. The chain is Salivary protein 15 Ipac-1 from Ixodes pacificus (Western black-legged tick).